Consider the following 320-residue polypeptide: ATP-dependent 6-phosphofructokinase (320 aa).

Gly-12 provides a ligand contact to ATP. 22 to 26 (RGVVR) contacts ADP. ATP is bound by residues 73 to 74 (RF) and 103 to 106 (GDGS). Asp-104 contacts Mg(2+). 126–128 (TID) contributes to the substrate binding site. Asp-128 (proton acceptor) is an active-site residue. Arg-155 is a binding site for ADP. Residues Arg-163 and 170 to 172 (MGR) each bind substrate. Residues 186–188 (GCE), Lys-212, and 214–216 (KKH) each bind ADP. Substrate is bound by residues Glu-223, Arg-244, and 250–253 (HIQR).

Belongs to the phosphofructokinase type A (PFKA) family. ATP-dependent PFK group I subfamily. Prokaryotic clade 'B1' sub-subfamily. Homotetramer. It depends on Mg(2+) as a cofactor.

The protein localises to the cytoplasm. It catalyses the reaction beta-D-fructose 6-phosphate + ATP = beta-D-fructose 1,6-bisphosphate + ADP + H(+). Its pathway is carbohydrate degradation; glycolysis; D-glyceraldehyde 3-phosphate and glycerone phosphate from D-glucose: step 3/4. Its activity is regulated as follows. Allosterically activated by ADP and other diphosphonucleosides, and allosterically inhibited by phosphoenolpyruvate. Functionally, catalyzes the phosphorylation of D-fructose 6-phosphate to fructose 1,6-bisphosphate by ATP, the first committing step of glycolysis. The sequence is that of ATP-dependent 6-phosphofructokinase from Vibrio vulnificus (strain CMCP6).